The primary structure comprises 75 residues: Small ribosomal subunit protein bS18 (75 aa).

Belongs to the bacterial ribosomal protein bS18 family. Part of the 30S ribosomal subunit. Forms a tight heterodimer with protein bS6.

In terms of biological role, binds as a heterodimer with protein bS6 to the central domain of the 16S rRNA, where it helps stabilize the platform of the 30S subunit. The polypeptide is Small ribosomal subunit protein bS18 (Psychrobacter sp. (strain PRwf-1)).